The following is a 453-amino-acid chain: Tubulin beta-2 chain (453 aa).

The GTP site is built by Gln-11, Glu-71, Ser-140, Gly-144, Thr-145, Gly-146, Asn-206, and Asn-228. Glu-71 contacts Mg(2+).

Belongs to the tubulin family. As to quaternary structure, dimer of alpha and beta chains. A typical microtubule is a hollow water-filled tube with an outer diameter of 25 nm and an inner diameter of 15 nM. Alpha-beta heterodimers associate head-to-tail to form protofilaments running lengthwise along the microtubule wall with the beta-tubulin subunit facing the microtubule plus end conferring a structural polarity. Microtubules usually have 13 protofilaments but different protofilament numbers can be found in some organisms and specialized cells. Mg(2+) is required as a cofactor.

Its subcellular location is the cytoplasm. The protein localises to the cytoskeleton. Functionally, tubulin is the major constituent of microtubules, a cylinder consisting of laterally associated linear protofilaments composed of alpha- and beta-tubulin heterodimers. Microtubules grow by the addition of GTP-tubulin dimers to the microtubule end, where a stabilizing cap forms. Below the cap, tubulin dimers are in GDP-bound state, owing to GTPase activity of alpha-tubulin. The sequence is that of Tubulin beta-2 chain from Geotrichum candidum (Oospora lactis).